The chain runs to 224 residues: Uracil-DNA glycosylase 2 (224 aa).

Aspartate 64 acts as the Proton acceptor in catalysis.

It belongs to the uracil-DNA glycosylase (UDG) superfamily. UNG family.

It localises to the cytoplasm. The catalysed reaction is Hydrolyzes single-stranded DNA or mismatched double-stranded DNA and polynucleotides, releasing free uracil.. Excises uracil residues from the DNA which can arise as a result of misincorporation of dUMP residues by DNA polymerase or due to deamination of cytosine. The chain is Uracil-DNA glycosylase 2 from Listeria innocua serovar 6a (strain ATCC BAA-680 / CLIP 11262).